The sequence spans 445 residues: Type II methyltransferase M.Bpa9945I (445 aa).

Positions 1–444 (MIVIDLFSGA…RAVKDVINGH (444 aa)) constitute an SAM-dependent MTase C5-type domain. The active site involves C136.

The protein belongs to the class I-like SAM-binding methyltransferase superfamily. C5-methyltransferase family.

Its subcellular location is the cytoplasm. It carries out the reaction a 2'-deoxycytidine in DNA + S-adenosyl-L-methionine = a 5-methyl-2'-deoxycytidine in DNA + S-adenosyl-L-homocysteine + H(+). Component of antiviral defense system DISARM (defense island system associated with restriction-modification), composed of DrmE, DrmA, DrmB, DrmC and DrmMII. DISARM is probably a multi-gene restriction module, this subunit is a DNA methylase. Expression of DISARM in B.subtilis (strain BEST7003) confers resistance to phages Nf, phi29, phi105, phi3T, SPO1, SPR and SPP1. Protection is over 10(7)-fold against phi3T, 10(4)-10(5)-fold against Nf, phi29, phi105 and SPR, 100-fold against SPO1 and 10-fold against SPP1. DISARM does not interfere with phage adsorption, but instead interferes with (phi3T) DNA replication early in its cycle, preventing replication, circularization and lysogeny and probably causes phage DNA degradation (DNA is degraded in SPP1-infected cells). Expression of this methylase alone leads to highly methylated phage, however they are still susceptible to the DISARM system. Its function is as follows. A methylase, recognizes the double-stranded sequence 5'-CCWGG-3', methylates C-2 on both strands. Phage Nf does not have any 5'-CCWGG-3' motifs but is still targeted by the DISARM system. The protein is Type II methyltransferase M.Bpa9945I of Bacillus paralicheniformis (strain ATCC 9945a / NCIMB 11709 / CD-2).